The following is a 663-amino-acid chain: Transketolase 2 (663 aa).

H25 contributes to the substrate binding site. Thiamine diphosphate is bound by residues H65 and 113–115; that span reads GPL. D154 contributes to the Mg(2+) binding site. 2 residues coordinate thiamine diphosphate: G155 and N184. Mg(2+)-binding residues include N184 and I186. Substrate-binding residues include H259, R356, and S383. H259 serves as a coordination point for thiamine diphosphate. The active-site Proton donor is the E410. F436 contributes to the thiamine diphosphate binding site. Substrate contacts are provided by H460, D468, and R519.

This sequence belongs to the transketolase family. As to quaternary structure, homodimer. It depends on Mg(2+) as a cofactor. Ca(2+) is required as a cofactor. Requires Mn(2+) as cofactor. Co(2+) serves as cofactor. The cofactor is thiamine diphosphate.

It carries out the reaction D-sedoheptulose 7-phosphate + D-glyceraldehyde 3-phosphate = aldehydo-D-ribose 5-phosphate + D-xylulose 5-phosphate. Catalyzes the transfer of a two-carbon ketol group from a ketose donor to an aldose acceptor, via a covalent intermediate with the cofactor thiamine pyrophosphate. This Vibrio vulnificus (strain CMCP6) protein is Transketolase 2 (tkt2).